The sequence spans 347 residues: NADH-ubiquinone oxidoreductase chain 2 (347 aa).

The next 11 membrane-spanning stretches (helical) occupy residues 3–23 (PPILIIIMSTVMSGTMIVLTS), 25–45 (HWLLIWIGFEMNMLAIIPILM), 60–80 (FLTQATASMLLMMGIIINLMF), 96–116 (GLVTIALTMKLGMAPFHFWVP), 122–142 (ISLSSGMILLTWQKIAPLSIL), 153–173 (LLITMAIASVLIGGWGGLNQT), 178–198 (ILAYSSIAHMGWMAVILTYNP), 200–220 (LMILNLTIYITMTLSTFMLFM), 237–257 (LPLMTSLILVLMMSLGGLPPL), 274–294 (DMIILPTFMAITALLNLYFYM), and 323–343 (IILLPPLIIISTMLLPMTPMM).

It belongs to the complex I subunit 2 family. Core subunit of respiratory chain NADH dehydrogenase (Complex I) which is composed of 45 different subunits. Interacts with TMEM242.

It localises to the mitochondrion inner membrane. It catalyses the reaction a ubiquinone + NADH + 5 H(+)(in) = a ubiquinol + NAD(+) + 4 H(+)(out). Functionally, core subunit of the mitochondrial membrane respiratory chain NADH dehydrogenase (Complex I) which catalyzes electron transfer from NADH through the respiratory chain, using ubiquinone as an electron acceptor. Essential for the catalytic activity and assembly of complex I. The sequence is that of NADH-ubiquinone oxidoreductase chain 2 from Halichoerus grypus (Gray seal).